The following is a 288-amino-acid chain: Phosphate import ATP-binding protein PstB (288 aa).

The ABC transporter domain maps to 42 to 283; the sequence is IRDLNFYYEN…PKEKKTRDYI (242 aa). 74 to 81 provides a ligand contact to ATP; sequence GPSGCGKS.

Belongs to the ABC transporter superfamily. Phosphate importer (TC 3.A.1.7) family. The complex is composed of two ATP-binding proteins (PstB), two transmembrane proteins (PstC and PstA) and a solute-binding protein (PstS).

Its subcellular location is the cell membrane. It carries out the reaction phosphate(out) + ATP + H2O = ADP + 2 phosphate(in) + H(+). Its function is as follows. Part of the ABC transporter complex PstSACB involved in phosphate import. Responsible for energy coupling to the transport system. This is Phosphate import ATP-binding protein PstB from Malacoplasma penetrans (strain HF-2) (Mycoplasma penetrans).